The primary structure comprises 308 residues: Glycine--tRNA ligase alpha subunit (308 aa).

The protein belongs to the class-II aminoacyl-tRNA synthetase family. In terms of assembly, tetramer of two alpha and two beta subunits.

Its subcellular location is the cytoplasm. The enzyme catalyses tRNA(Gly) + glycine + ATP = glycyl-tRNA(Gly) + AMP + diphosphate. This is Glycine--tRNA ligase alpha subunit from Brucella abortus (strain 2308).